Here is a 131-residue protein sequence, read N- to C-terminus: Small ribosomal subunit protein eS6 (131 aa).

The disordered stretch occupies residues 76 to 95 (APPGFKPKRKGERRRKTVRG). Residues 81-93 (KPKRKGERRRKTV) are compositionally biased toward basic residues.

Belongs to the eukaryotic ribosomal protein eS6 family.

This chain is Small ribosomal subunit protein eS6, found in Methanocaldococcus jannaschii (strain ATCC 43067 / DSM 2661 / JAL-1 / JCM 10045 / NBRC 100440) (Methanococcus jannaschii).